The sequence spans 320 residues: Cytochrome f (320 aa).

A signal peptide spans Met1–Ala35. The heme site is built by Tyr36, Cys56, Cys59, and His60. Residues Val286 to Lys306 form a helical membrane-spanning segment.

This sequence belongs to the cytochrome f family. As to quaternary structure, the 4 large subunits of the cytochrome b6-f complex are cytochrome b6, subunit IV (17 kDa polypeptide, petD), cytochrome f and the Rieske protein, while the 4 small subunits are PetG, PetL, PetM and PetN. The complex functions as a dimer. Heme serves as cofactor.

It localises to the plastid. The protein resides in the chloroplast thylakoid membrane. Component of the cytochrome b6-f complex, which mediates electron transfer between photosystem II (PSII) and photosystem I (PSI), cyclic electron flow around PSI, and state transitions. This is Cytochrome f from Agrostis stolonifera (Creeping bentgrass).